The primary structure comprises 363 residues: Trans-2,3-enoyl-CoA reductase-like (363 aa).

Ser-37 bears the Phosphoserine mark. 3 consecutive transmembrane segments (helical) span residues 143–163, 217–237, and 311–331; these read WTTV…LFYL, LIMS…YINH, and ISFT…LMSI.

This sequence belongs to the steroid 5-alpha reductase family. In terms of tissue distribution, predominantly expressed in the heart and skeletal muscle.

The protein localises to the membrane. The protein resides in the endoplasmic reticulum. The chain is Trans-2,3-enoyl-CoA reductase-like (TECRL) from Homo sapiens (Human).